The sequence spans 425 residues: Serine--tRNA ligase (425 aa).

A disordered region spans residues 41–70; the sequence is TERSQLQARSNQVGKQVGEKIKSGSDPKGT. Residues 44–54 are compositionally biased toward polar residues; that stretch reads SQLQARSNQVG. The span at 57–70 shows a compositional bias: basic and acidic residues; that stretch reads VGEKIKSGSDPKGT. Residue 234–236 coordinates L-serine; sequence TSE. 265-267 serves as a coordination point for ATP; the sequence is RRE. Glutamate 288 lines the L-serine pocket. 352–355 is a binding site for ATP; it reads EISS. Serine 388 serves as a coordination point for L-serine.

It belongs to the class-II aminoacyl-tRNA synthetase family. Type-1 seryl-tRNA synthetase subfamily. In terms of assembly, homodimer. The tRNA molecule binds across the dimer.

It is found in the cytoplasm. It catalyses the reaction tRNA(Ser) + L-serine + ATP = L-seryl-tRNA(Ser) + AMP + diphosphate + H(+). The catalysed reaction is tRNA(Sec) + L-serine + ATP = L-seryl-tRNA(Sec) + AMP + diphosphate + H(+). It participates in aminoacyl-tRNA biosynthesis; selenocysteinyl-tRNA(Sec) biosynthesis; L-seryl-tRNA(Sec) from L-serine and tRNA(Sec): step 1/1. Its function is as follows. Catalyzes the attachment of serine to tRNA(Ser). Is also able to aminoacylate tRNA(Sec) with serine, to form the misacylated tRNA L-seryl-tRNA(Sec), which will be further converted into selenocysteinyl-tRNA(Sec). The chain is Serine--tRNA ligase from Trichodesmium erythraeum (strain IMS101).